The following is an 88-amino-acid chain: DNA-directed RNA polymerase subunit omega (88 aa).

The protein belongs to the RNA polymerase subunit omega family. The RNAP catalytic core consists of 2 alpha, 1 beta, 1 beta' and 1 omega subunit. When a sigma factor is associated with the core the holoenzyme is formed, which can initiate transcription.

The enzyme catalyses RNA(n) + a ribonucleoside 5'-triphosphate = RNA(n+1) + diphosphate. Functionally, promotes RNA polymerase assembly. Latches the N- and C-terminal regions of the beta' subunit thereby facilitating its interaction with the beta and alpha subunits. The polypeptide is DNA-directed RNA polymerase subunit omega (Kineococcus radiotolerans (strain ATCC BAA-149 / DSM 14245 / SRS30216)).